Consider the following 310-residue polypeptide: MFADLIPRLRDAMPELRGELQTNVPLAPWTWFKTGGPAQCVYVAPDVEDLAYFLGNLDPDISIFVLGLGSNILVRDGGIEGVVISFGPSFHKIVIEGDTISAGAAVADVKLASAAAMAGLGGFAFLRGIPGTIGGALRMNAGAFGGTIADILVSCEGLDRRGALHHFTPEEMGFSYRHCAVEGIIFTQGLFAGWPENPEKIREDMGKIAQERAKTQPVNTRTGGSTFKNPNGAKAWELIDRAGCRGLTLGDAQVSELHCNFLVNRGKASAADIENLGEMVRQKVLAETGVELEWEILRVGRPPVAHKTSR.

The FAD-binding PCMH-type domain maps to 34–211; that stretch reads TGGPAQCVYV…REDMGKIAQE (178 aa). The active site involves Arg177. Ser225 serves as the catalytic Proton donor. Glu295 is an active-site residue.

It belongs to the MurB family. FAD is required as a cofactor.

The protein localises to the cytoplasm. The catalysed reaction is UDP-N-acetyl-alpha-D-muramate + NADP(+) = UDP-N-acetyl-3-O-(1-carboxyvinyl)-alpha-D-glucosamine + NADPH + H(+). It functions in the pathway cell wall biogenesis; peptidoglycan biosynthesis. Functionally, cell wall formation. This chain is UDP-N-acetylenolpyruvoylglucosamine reductase, found in Beijerinckia indica subsp. indica (strain ATCC 9039 / DSM 1715 / NCIMB 8712).